The sequence spans 91 residues: Mercuric transport protein periplasmic component (91 aa).

A signal peptide spans 1 to 19 (MKKLFAALALAAVVAPVWA). The HMA domain maps to 22–88 (QTVTLSVPGM…ATGDAGYPSS (67 aa)). Residues cysteine 33 and cysteine 36 each contribute to the Hg(2+) site.

The protein belongs to the MerP family. Monomer.

The protein localises to the periplasm. Its function is as follows. Involved in mercury resistance. Acts as a mercury scavenger that specifically binds to a mercuric ion in the periplasm and probably passes it to the cytoplasmic mercuric reductase MerA via the mercuric transport protein MerT. This is Mercuric transport protein periplasmic component (merP) from Alcaligenes sp.